We begin with the raw amino-acid sequence, 434 residues long: Angio-associated migratory cell protein (434 aa).

Residues 1–63 are disordered; it reads MESESESGAA…EEEEEEGNEE (63 aa). Position 20 is a phosphoserine (Ser-20). The span at 39-62 shows a compositional bias: acidic residues; the sequence is DPDDLAQEMEDVDFEEEEEEEGNE. WD repeat units lie at residues 89-129, 132-171, 173-212, 214-254, 258-299, 315-354, 356-395, and 398-433; these read LHSA…LLFE, GHKDSVTCAGFSHDSTLVATGDMSGLLKVWQVDTKEEVWS, EAGDLEWMEWHPRAPVLLAGTADGNTWMWKVPNGDCKTFQ, PNCP…HVLK, GHQG…GVFR, SESNSVESLGFCSVMPLAAVGYLDGTLAIYDLATQTLRHQ, QHQSGIVQLLWEAGTAVVYTCSLDGIVRLWDARTGRLLTD, and GHTAEILDFALSKDASLVVTTSGDHKAKVFCVQRPD.

As to expression, expressed in metastatic melanoma, liver, skin, kidney, heart, lung, lymph node, skeletal muscle and brain, and also in A2058 melanoma cells and activated T-cells (at protein level). Expressed in blood vessels. Strongly expressed in endothelial cells, cytotrophoblasts, and poorly differentiated. colon adenocarcinoma cells found in lymphatics.

It is found in the cell membrane. Its subcellular location is the cytoplasm. Functionally, plays a role in angiogenesis and cell migration. In smooth muscle cell migration, may act through the RhoA pathway. The chain is Angio-associated migratory cell protein (AAMP) from Homo sapiens (Human).